We begin with the raw amino-acid sequence, 310 residues long: Olfactory receptor 5W2 (310 aa).

At 1 to 25 (MDWENCSSLTDFFLLGITNNPEMKV) the chain is on the extracellular side. N-linked (GlcNAc...) asparagine glycosylation occurs at Asn-5. Residues 26–46 (TLFAVFLAVYIINFSANLGMI) form a helical membrane-spanning segment. Residues 47–54 (VLIRMDYQ) are Cytoplasmic-facing. A helical transmembrane segment spans residues 55–75 (LHTPMYFFLSHLSFCDLCYST). Residues 76–99 (ATGPKMLVDLLAKNKSIPFYGCAL) are Extracellular-facing. The helical transmembrane segment at 100–120 (QFLVFCIFADSECLLLSVMAF) threads the bilayer. The Cytoplasmic portion of the chain corresponds to 121 to 139 (DRYKAIINPLLYTVNMSSR). The helical transmembrane segment at 140-160 (VCYLLLTGVYLVGIADALIHM) threads the bilayer. At 161–196 (TLAFRLCFCGSNEINHFFCDIPPLLLLSRSDTQVNE) the chain is on the extracellular side. A helical transmembrane segment spans residues 197 to 217 (LVLFTVFGFIELSTISGVFIS). Over 218–237 (YCYIILSVLEIHSAEGRFKA) the chain is Cytoplasmic. Residues 238–258 (LSTCTSHLSAVAIFQGTLLFM) traverse the membrane as a helical segment. At 259–271 (YFRPSSSYSLDQD) the chain is on the extracellular side. The chain crosses the membrane as a helical span at residues 272–292 (KMTSLFYTLVVPMLNPLIYSL). The Cytoplasmic portion of the chain corresponds to 293–310 (RNKDVKEALKKLKNKILF).

It belongs to the G-protein coupled receptor 1 family.

It is found in the cell membrane. In terms of biological role, odorant receptor. The sequence is that of Olfactory receptor 5W2 (OR5W2) from Homo sapiens (Human).